Reading from the N-terminus, the 233-residue chain is Sugar fermentation stimulation protein homolog (233 aa).

It belongs to the SfsA family.

This Chelativorans sp. (strain BNC1) protein is Sugar fermentation stimulation protein homolog.